The following is a 389-amino-acid chain: Mesotocin receptor (389 aa).

Residues M1–V50 lie on the Extracellular side of the membrane. N15, N20, N27, and N31 each carry an N-linked (GlcNAc...) asparagine glycan. The helical transmembrane segment at L51–I71 threads the bilayer. Residues N72–S87 are Cytoplasmic-facing. A helical transmembrane segment spans residues I88–F108. Residues R109–L119 are Extracellular-facing. C117 and C192 are oxidised to a cystine. The helical transmembrane segment at V120–L140 threads the bilayer. Topologically, residues D141–C159 are cytoplasmic. A helical transmembrane segment spans residues V160–F180. Residues S181 to T207 lie on the Extracellular side of the membrane. The helical transmembrane segment at W208–I228 threads the bilayer. The Cytoplasmic portion of the chain corresponds to S229–M275. A helical transmembrane segment spans residues T276 to W296. Residues S297–S308 lie on the Extracellular side of the membrane. Residues L309 to M329 form a helical membrane-spanning segment. At L330–A389 the chain is on the cytoplasmic side. The tract at residues L360–A389 is disordered.

It belongs to the G-protein coupled receptor 1 family. Vasopressin/oxytocin receptor subfamily. As to expression, highly expressed in the bladder. Also expressed in kidney, brain and skeletal muscle.

The protein localises to the cell membrane. Binds to mesotocin and may play a role in the regulation of water and salt transport. In Rhinella marina (Cane toad), this protein is Mesotocin receptor.